The chain runs to 149 residues: D-aminoacyl-tRNA deacylase (149 aa).

The short motif at glycine 137 to proline 138 is the Gly-cisPro motif, important for rejection of L-amino acids element.

Belongs to the DTD family. As to quaternary structure, homodimer.

It localises to the cytoplasm. It catalyses the reaction glycyl-tRNA(Ala) + H2O = tRNA(Ala) + glycine + H(+). It carries out the reaction a D-aminoacyl-tRNA + H2O = a tRNA + a D-alpha-amino acid + H(+). An aminoacyl-tRNA editing enzyme that deacylates mischarged D-aminoacyl-tRNAs. Also deacylates mischarged glycyl-tRNA(Ala), protecting cells against glycine mischarging by AlaRS. Acts via tRNA-based rather than protein-based catalysis; rejects L-amino acids rather than detecting D-amino acids in the active site. By recycling D-aminoacyl-tRNA to D-amino acids and free tRNA molecules, this enzyme counteracts the toxicity associated with the formation of D-aminoacyl-tRNA entities in vivo and helps enforce protein L-homochirality. The protein is D-aminoacyl-tRNA deacylase of Desulforamulus reducens (strain ATCC BAA-1160 / DSM 100696 / MI-1) (Desulfotomaculum reducens).